Consider the following 254-residue polypeptide: MLLCLLYFTSSWCSGSDVPDVCTNSGMIAINFVDGPVRGVTDRILNTLDELGVKATFSFTVNQKAVGNVGQLYRRAVEEGHNVALRVDPSMDEGYQCLSQDALENNVDREIDTIDGLSGTEIRYAAVPICNGQVNSEMYNILTERGVLPVGYTFCPYDYDDPVGEFESMIEGSDPKHHSFIILMHDGQEADTSRLENMVKIGKDKGYRFVNMDECLQGYKGAPGDPELSLRGKGVESIGKGFLPFFLMMLVRLL.

The region spanning 26-210 (GMIAINFVDG…IGKDKGYRFV (185 aa)) is the NodB homology domain.

This is Polysaccharide deacetylase domain-containing protein ECU11_0510 from Encephalitozoon cuniculi (strain GB-M1) (Microsporidian parasite).